A 386-amino-acid chain; its full sequence is MASILTLDGLYAEVPKFLPEALREGCAGKNPLSFYIQQILNLMGCDGNEYHVLFTSSSEEANTHMIMAAVRRHLLRTRQRPHVIIGAAEPPSVTECVKALAQEKRCVYTIIPLKNFEIDPVAVYDAIQSNTCLACISGTNAVVKTFNKLQDISKVLRGIPLHSEVSDLVYQGCIKQNPPADSFSINSLYGFLGVGVLGMKKKVMQGLGPLIFGGGLRGGSPNIPGIHAMYRTLTQQRPSMKKINTIHKLFMKTLKKHQHIYLPIGGVSAEDMSAENSAKDIPSTDVPVGPKGLPGYILFSVGHRAEELQKKIFTKFNIKVGRIVDLQEILFRIKIPQKYWETLLFIQLRDNLTKEDIKRVMVVLMHLDTITPRGSLPPPSYSSSFS.

Pyridoxal 5'-phosphate contacts are provided by residues 58–59 (SE) and 184–186 (SIN).

It belongs to the class-V pyridoxal-phosphate-dependent aminotransferase family. NifS/IscS subfamily. The cofactor is pyridoxal 5'-phosphate.

It localises to the virion. The chain is NifS-like protein from Ornithodoros (relapsing fever ticks).